We begin with the raw amino-acid sequence, 283 residues long: uncharacterized protein (283 aa).

One can recognise an FAD-binding FR-type domain in the interval 4–131; it reads RPLHAFEVVA…MGPGGAYAPD (128 aa).

This is an uncharacterized protein from Mycobacterium bovis (strain ATCC BAA-935 / AF2122/97).